The following is a 340-amino-acid chain: Ketol-acid reductoisomerase (NADP(+)) (340 aa).

One can recognise a KARI N-terminal Rossmann domain in the interval 1–183; sequence MAITVYYDKD…GGGRTGIIET (183 aa). NADP(+) contacts are provided by residues 26–29, R49, S52, S54, and 84–87; these read FGSQ and DEIQ. Residue H109 is part of the active site. G135 lines the NADP(+) pocket. Residues 184-329 enclose the KARI C-terminal knotted domain; the sequence is TFKAETETDL…RNLRAMMPWI (146 aa). D192, E196, E228, and E232 together coordinate Mg(2+). S253 is a binding site for substrate.

Belongs to the ketol-acid reductoisomerase family. Requires Mg(2+) as cofactor.

The catalysed reaction is (2R)-2,3-dihydroxy-3-methylbutanoate + NADP(+) = (2S)-2-acetolactate + NADPH + H(+). The enzyme catalyses (2R,3R)-2,3-dihydroxy-3-methylpentanoate + NADP(+) = (S)-2-ethyl-2-hydroxy-3-oxobutanoate + NADPH + H(+). Its pathway is amino-acid biosynthesis; L-isoleucine biosynthesis; L-isoleucine from 2-oxobutanoate: step 2/4. It functions in the pathway amino-acid biosynthesis; L-valine biosynthesis; L-valine from pyruvate: step 2/4. In terms of biological role, involved in the biosynthesis of branched-chain amino acids (BCAA). Catalyzes an alkyl-migration followed by a ketol-acid reduction of (S)-2-acetolactate (S2AL) to yield (R)-2,3-dihydroxy-isovalerate. In the isomerase reaction, S2AL is rearranged via a Mg-dependent methyl migration to produce 3-hydroxy-3-methyl-2-ketobutyrate (HMKB). In the reductase reaction, this 2-ketoacid undergoes a metal-dependent reduction by NADPH to yield (R)-2,3-dihydroxy-isovalerate. The chain is Ketol-acid reductoisomerase (NADP(+)) from Campylobacter jejuni subsp. jejuni serotype O:23/36 (strain 81-176).